Here is a 289-residue protein sequence, read N- to C-terminus: NFU1 iron-sulfur cluster scaffold homolog, mitochondrial (289 aa).

A mitochondrion-targeting transit peptide spans 1-56 (MAKLISYAKGGFLRNTRLTSRAVPQVYQHATSSRGFVHLTSSVAQSSAIHVSTPST). The tract at residues 183 to 251 (IKELLDTRIR…IPEVESVEQV (69 aa)) is nifU. The [4Fe-4S] cluster site is built by cysteine 220 and cysteine 223. A disordered region spans residues 267–289 (ERNLKQKDTSSTAPVGIGGGPAN).

It belongs to the NifU family.

Its subcellular location is the mitochondrion. In terms of biological role, molecular scaffold for [Fe-S] cluster assembly of mitochondrial iron-sulfur proteins. This is NFU1 iron-sulfur cluster scaffold homolog, mitochondrial from Drosophila willistoni (Fruit fly).